We begin with the raw amino-acid sequence, 435 residues long: Protoheme IX farnesyltransferase, mitochondrial (435 aa).

Residues methionine 1 to histidine 35 constitute a mitochondrion transit peptide. 6 helical membrane passes run valine 135–leucine 155, leucine 157–glycine 177, glycine 212–alanine 232, isoleucine 250–alanine 270, valine 324–isoleucine 344, and phenylalanine 401–glycine 421.

It belongs to the UbiA prenyltransferase family.

It is found in the mitochondrion membrane. Converts protoheme IX and farnesyl diphosphate to heme O. This Eremothecium gossypii (strain ATCC 10895 / CBS 109.51 / FGSC 9923 / NRRL Y-1056) (Yeast) protein is Protoheme IX farnesyltransferase, mitochondrial (COX10).